Consider the following 224-residue polypeptide: Superoxide dismutase [Mn], mitochondrial (224 aa).

The transit peptide at 1-20 directs the protein to the mitochondrion; sequence MLLARAFARRSLRAGLWCRQ. Mn(2+) contacts are provided by H46, H94, D177, and H181.

Belongs to the iron/manganese superoxide dismutase family. In terms of assembly, homotetramer. The cofactor is Mn(2+).

It localises to the mitochondrion matrix. The enzyme catalyses 2 superoxide + 2 H(+) = H2O2 + O2. Functionally, destroys superoxide anion radicals which are normally produced within the cells and which are toxic to biological systems. In Charybdis feriata (Crucifix crab), this protein is Superoxide dismutase [Mn], mitochondrial.